A 251-amino-acid polypeptide reads, in one-letter code: Pyrroloquinoline-quinone synthase (251 aa).

Belongs to the PqqC family.

The enzyme catalyses 6-(2-amino-2-carboxyethyl)-7,8-dioxo-1,2,3,4,7,8-hexahydroquinoline-2,4-dicarboxylate + 3 O2 = pyrroloquinoline quinone + 2 H2O2 + 2 H2O + H(+). It participates in cofactor biosynthesis; pyrroloquinoline quinone biosynthesis. Its function is as follows. Ring cyclization and eight-electron oxidation of 3a-(2-amino-2-carboxyethyl)-4,5-dioxo-4,5,6,7,8,9-hexahydroquinoline-7,9-dicarboxylic-acid to PQQ. The protein is Pyrroloquinoline-quinone synthase of Cronobacter sakazakii (strain ATCC BAA-894) (Enterobacter sakazakii).